Reading from the N-terminus, the 493-residue chain is Hexokinase-like 1 protein (493 aa).

The Hexokinase domain occupies 38–488 (ASTCPILTKF…SGLGAALLAA (451 aa)). The segment at 93-232 (SGNEEGLFYA…GLDMRVSALV (140 aa)) is hexokinase small subdomain. ADP is bound by residues Gly-107, Thr-108, and Asn-109. Positions 198, 199, 233, and 234 each coordinate D-glucose. Positions 233 to 477 (NDGVGTLAGA…SHVAIKHTKD (245 aa)) are hexokinase large subdomain. Residue Thr-257 coordinates ADP. Positions 260, 287, and 317 each coordinate D-glucose. Ala-442 is a binding site for ADP.

This sequence belongs to the hexokinase family.

It carries out the reaction a D-hexose + ATP = a D-hexose 6-phosphate + ADP + H(+). The enzyme catalyses D-fructose + ATP = D-fructose 6-phosphate + ADP + H(+). It catalyses the reaction D-glucose + ATP = D-glucose 6-phosphate + ADP + H(+). It functions in the pathway carbohydrate metabolism; hexose metabolism. Its pathway is carbohydrate degradation; glycolysis; D-glyceraldehyde 3-phosphate and glycerone phosphate from D-glucose: step 1/4. In terms of biological role, fructose and glucose phosphorylating enzyme. The polypeptide is Hexokinase-like 1 protein (Arabidopsis thaliana (Mouse-ear cress)).